The following is a 440-amino-acid chain: tRNA(Ile)-lysidine synthase (440 aa).

Position 25–30 (25–30 (SGGVDS)) interacts with ATP.

It belongs to the tRNA(Ile)-lysidine synthase family.

The protein resides in the cytoplasm. It catalyses the reaction cytidine(34) in tRNA(Ile2) + L-lysine + ATP = lysidine(34) in tRNA(Ile2) + AMP + diphosphate + H(+). Ligates lysine onto the cytidine present at position 34 of the AUA codon-specific tRNA(Ile) that contains the anticodon CAU, in an ATP-dependent manner. Cytidine is converted to lysidine, thus changing the amino acid specificity of the tRNA from methionine to isoleucine. The chain is tRNA(Ile)-lysidine synthase from Vibrio cholerae serotype O1 (strain ATCC 39315 / El Tor Inaba N16961).